We begin with the raw amino-acid sequence, 533 residues long: Peptide chain release factor 3 (533 aa).

Residues 10–278 (EKRRTFAIIS…TFVEIAPPPQ (269 aa)) enclose the tr-type G domain. GTP-binding positions include 19 to 26 (SHPDAGKT), 87 to 91 (DTPGH), and 141 to 144 (NKMD).

It belongs to the TRAFAC class translation factor GTPase superfamily. Classic translation factor GTPase family. PrfC subfamily.

The protein localises to the cytoplasm. In terms of biological role, increases the formation of ribosomal termination complexes and stimulates activities of RF-1 and RF-2. It binds guanine nucleotides and has strong preference for UGA stop codons. It may interact directly with the ribosome. The stimulation of RF-1 and RF-2 is significantly reduced by GTP and GDP, but not by GMP. This chain is Peptide chain release factor 3, found in Salinibacter ruber (strain DSM 13855 / M31).